The chain runs to 429 residues: Histidine--tRNA ligase (429 aa).

It belongs to the class-II aminoacyl-tRNA synthetase family. As to quaternary structure, homodimer.

It is found in the cytoplasm. The enzyme catalyses tRNA(His) + L-histidine + ATP = L-histidyl-tRNA(His) + AMP + diphosphate + H(+). In Pseudomonas aeruginosa (strain UCBPP-PA14), this protein is Histidine--tRNA ligase.